Here is a 255-residue protein sequence, read N- to C-terminus: tRNA pseudouridine synthase A (255 aa).

The active-site Nucleophile is the aspartate 52. Tyrosine 111 contributes to the substrate binding site.

The protein belongs to the tRNA pseudouridine synthase TruA family. In terms of assembly, homodimer.

The catalysed reaction is uridine(38/39/40) in tRNA = pseudouridine(38/39/40) in tRNA. Formation of pseudouridine at positions 38, 39 and 40 in the anticodon stem and loop of transfer RNAs. This chain is tRNA pseudouridine synthase A, found in Cereibacter sphaeroides (strain ATCC 17029 / ATH 2.4.9) (Rhodobacter sphaeroides).